Here is a 246-residue protein sequence, read N- to C-terminus: Dihydroorotate dehydrogenase B (NAD(+)), electron transfer subunit (246 aa).

Residues 3–95 (MEYFKGKVKE…IGPLGNGFDI (93 aa)) form the FAD-binding FR-type domain. Residues 48-51 (RPIS) and 70-71 (GT) each bind FAD. Positions 213, 218, 221, and 233 each coordinate [2Fe-2S] cluster.

It belongs to the PyrK family. As to quaternary structure, heterotetramer of 2 PyrK and 2 PyrD type B subunits. [2Fe-2S] cluster serves as cofactor. The cofactor is FAD.

Its pathway is pyrimidine metabolism; UMP biosynthesis via de novo pathway; orotate from (S)-dihydroorotate (NAD(+) route): step 1/1. Responsible for channeling the electrons from the oxidation of dihydroorotate from the FMN redox center in the PyrD type B subunit to the ultimate electron acceptor NAD(+). This chain is Dihydroorotate dehydrogenase B (NAD(+)), electron transfer subunit, found in Clostridium perfringens (strain 13 / Type A).